Consider the following 221-residue polypeptide: Early nodulin-like protein 4 (221 aa).

The first 21 residues, 1–21 (MVFVKMTDVYLMIVMLMGLGF), serve as a signal peptide directing secretion. The Phytocyanin domain maps to 29 to 130 (HKFYVGGRDG…GQKLAVTVMS (102 aa)). N-linked (GlcNAc...) asparagine glycosylation is found at Asn59 and Asn85. A disulfide bridge connects residues Cys84 and Cys118. Residues 130 to 185 (STGHHSHTPRHPSPSPSPSASPVRKALLSPAPIPVHKALSSPAPTPGVDPSHSEVL) are disordered. Asn197 carries the GPI-anchor amidated asparagine lipid modification. A propeptide spans 198–221 (LAGSVAPGVISLGLVLVIMISSMV) (removed in mature form).

This sequence belongs to the early nodulin-like (ENODL) family. Confined to flowers.

The protein localises to the cell membrane. In terms of biological role, may act as a carbohydrate transporter. The protein is Early nodulin-like protein 4 of Arabidopsis thaliana (Mouse-ear cress).